The sequence spans 374 residues: Tomoregulin-2 (374 aa).

Positions 1-40 (MVLWESPRQCSSWTLCEGFCWLLLLPVMLLIVARPVKLAA) are cleaved as a signal peptide. The Extracellular segment spans residues 41–320 (FPTSLSDCQT…VPGPVRFQYV (280 aa)). Kazal-like domains follow at residues 90–137 (VCQF…SCAT) and 181–229 (VCNI…RCQD). 6 cysteine pairs are disulfide-bonded: C91-C121, C95-C114, C103-C135, C182-C213, C186-C206, and C195-C227. Residue N204 is glycosylated (N-linked (GlcNAc...) (complex) asparagine; atypical). N-linked (GlcNAc...) asparagine glycosylation occurs at N230. In terms of domain architecture, EGF-like spans 261 to 301 (HHIPCPEHYNGFCMHGKCEHSINMQEPSCRCDAGYTGQHCE). Intrachain disulfides connect C265–C278, C273–C289, and C291–C300. Residues 303–320 (KDYSVLYVVPGPVRFQYV) are required for shedding. The chain crosses the membrane as a helical span at residues 321-341 (LIAAVIGTIQIAVICVVVLCI). The Cytoplasmic segment spans residues 342–374 (TRKCPRSNRIHRQKQNTGHYSSDNTTRASTRLI). Residues 353–374 (RQKQNTGHYSSDNTTRASTRLI) form a disordered region. The span at 356–374 (QNTGHYSSDNTTRASTRLI) shows a compositional bias: polar residues.

It belongs to the tomoregulin family. Post-translationally, O-glycosylated; contains chondroitin sulfate glycosaminoglycans. In terms of processing, a soluble form (TMEFF2-ECD) is produced by proteolytic shedding. This shedding can be induced by phorbol ester or pro-inflammatory cytokines such as TNFalpha, and is mediated by ADAM17. Highly expressed in adult and fetal brain, spinal cord and prostate. Expressed in all brain regions except the pituitary gland, with highest levels in amygdala and corpus callosum. Expressed in the pericryptal myofibroblasts and other stromal cells of normal colonic mucosa. Expressed in prostate carcinoma. Down-regulated in colorectal cancer. Present in Alzheimer disease plaques (at protein level). Isoform 3 is expressed weakly in testis and at high levels in normal and cancerous prostate.

It is found in the membrane. It localises to the secreted. May be a survival factor for hippocampal and mesencephalic neurons. The shedded form up-regulates cancer cell proliferation, probably by promoting ERK1/2 phosphorylation. This chain is Tomoregulin-2 (TMEFF2), found in Homo sapiens (Human).